The sequence spans 151 residues: MTNSPSSPVVLTNEEIMGLLPHRYPFALVDRVVEYEPGKSATGIKNVTINEPHFQGHFPGRPLMPGVLIVEAMAQVGGLIVKQIPDLPKGLFVFAGIDSVRFRRPVVPGDQLLINCELISIKRQRFGKVKGEAKVDGNLVCSGELMFSLVD.

His-57 is an active-site residue.

Belongs to the thioester dehydratase family. FabZ subfamily.

The protein resides in the cytoplasm. It carries out the reaction a (3R)-hydroxyacyl-[ACP] = a (2E)-enoyl-[ACP] + H2O. Involved in unsaturated fatty acids biosynthesis. Catalyzes the dehydration of short chain beta-hydroxyacyl-ACPs and long chain saturated and unsaturated beta-hydroxyacyl-ACPs. This Prochlorococcus marinus (strain SARG / CCMP1375 / SS120) protein is 3-hydroxyacyl-[acyl-carrier-protein] dehydratase FabZ.